The primary structure comprises 203 residues: Glycerol-3-phosphate acyltransferase (203 aa).

A run of 4 helical transmembrane segments spans residues 4 to 24, 68 to 88, 104 to 124, and 125 to 145; these read LTFA…AVLI, IPVY…FIGI, GGKG…DMGS, and FMIV…LAAI.

Belongs to the PlsY family. Probably interacts with PlsX.

Its subcellular location is the cell inner membrane. It catalyses the reaction an acyl phosphate + sn-glycerol 3-phosphate = a 1-acyl-sn-glycero-3-phosphate + phosphate. The protein operates within lipid metabolism; phospholipid metabolism. In terms of biological role, catalyzes the transfer of an acyl group from acyl-phosphate (acyl-PO(4)) to glycerol-3-phosphate (G3P) to form lysophosphatidic acid (LPA). This enzyme utilizes acyl-phosphate as fatty acyl donor, but not acyl-CoA or acyl-ACP. This chain is Glycerol-3-phosphate acyltransferase, found in Tolumonas auensis (strain DSM 9187 / NBRC 110442 / TA 4).